Consider the following 308-residue polypeptide: Ribonuclease 3 (308 aa).

Residues 20-145 (YLRFYKMLGF…LVGAIYLDRG (126 aa)) form the RNase III domain. Glu62 is a binding site for Mg(2+). Asp66 is a catalytic residue. Mg(2+) contacts are provided by Asn131 and Glu134. Glu134 is an active-site residue. The 70-residue stretch at 173–242 (NFKSKLIEWS…ARVALGKIKN (70 aa)) folds into the DRBM domain. The tract at residues 261–281 (QEEVTVSDSKPSDSGAVTPDL) is disordered.

The protein belongs to the ribonuclease III family. In terms of assembly, homodimer. Requires Mg(2+) as cofactor.

The protein localises to the cytoplasm. It carries out the reaction Endonucleolytic cleavage to 5'-phosphomonoester.. In terms of biological role, digests double-stranded RNA. Involved in the processing of primary rRNA transcript to yield the immediate precursors to the large and small rRNAs (23S and 16S). Processes some mRNAs, and tRNAs when they are encoded in the rRNA operon. Processes pre-crRNA and tracrRNA of type II CRISPR loci if present in the organism. The protein is Ribonuclease 3 of Phocaeicola vulgatus (strain ATCC 8482 / DSM 1447 / JCM 5826 / CCUG 4940 / NBRC 14291 / NCTC 11154) (Bacteroides vulgatus).